The following is a 210-amino-acid chain: Probable membrane protein MT1774 (210 aa).

The next 2 helical transmembrane spans lie at 43 to 63 (AVVM…AAAA) and 165 to 185 (ALAA…LLAL).

It is found in the cell membrane. In Mycobacterium tuberculosis (strain CDC 1551 / Oshkosh), this protein is Probable membrane protein MT1774.